Consider the following 316-residue polypeptide: Peroxidase 67 (316 aa).

The signal sequence occupies residues 1-19; the sequence is MLKVVLLMMIMMLASQSEA. Position 20 is a pyrrolidone carboxylic acid (Q20). 4 cysteine pairs are disulfide-bonded: C30-C110, C63-C68, C116-C312, and C196-C221. The Proton acceptor role is filled by H61. 5 residues coordinate Ca(2+): D62, V65, G67, D69, and S71. Position 159 (P159) interacts with substrate. H189 provides a ligand contact to heme b. T190 is a Ca(2+) binding site. The N-linked (GlcNAc...) asparagine glycan is linked to N205. Ca(2+)-binding residues include D236, S239, and D244.

The protein belongs to the peroxidase family. Classical plant (class III) peroxidase subfamily. Requires heme b as cofactor. Ca(2+) is required as a cofactor.

The protein localises to the secreted. The enzyme catalyses 2 a phenolic donor + H2O2 = 2 a phenolic radical donor + 2 H2O. Its function is as follows. Removal of H(2)O(2), oxidation of toxic reductants, biosynthesis and degradation of lignin, suberization, auxin catabolism, response to environmental stresses such as wounding, pathogen attack and oxidative stress. These functions might be dependent on each isozyme/isoform in each plant tissue. The sequence is that of Peroxidase 67 (PER67) from Arabidopsis thaliana (Mouse-ear cress).